The sequence spans 419 residues: Tyrosine--tRNA ligase 2 (419 aa).

Y34 is a binding site for L-tyrosine. Positions 39–48 (PTGDSMHIGH) match the 'HIGH' region motif. 2 residues coordinate L-tyrosine: Y168 and Q172. A 'KMSKS' region motif is present at residues 230–234 (KFGKS). K233 provides a ligand contact to ATP. One can recognise an S4 RNA-binding domain in the interval 352–418 (KNIVEWLVDL…GKKNYSLVKL (67 aa)).

Belongs to the class-I aminoacyl-tRNA synthetase family. TyrS type 1 subfamily. Homodimer.

It is found in the cytoplasm. It carries out the reaction tRNA(Tyr) + L-tyrosine + ATP = L-tyrosyl-tRNA(Tyr) + AMP + diphosphate + H(+). Catalyzes the attachment of tyrosine to tRNA(Tyr) in a two-step reaction: tyrosine is first activated by ATP to form Tyr-AMP and then transferred to the acceptor end of tRNA(Tyr). This is Tyrosine--tRNA ligase 2 from Bacillus cereus (strain ZK / E33L).